Reading from the N-terminus, the 448-residue chain is Protein odr-4 homolog (448 aa).

Transmembrane regions (helical) follow at residues Ala76–Thr96 and Gly428–Ile448.

Belongs to the ODR-4 family.

The protein localises to the membrane. Functionally, may play a role in the trafficking of a subset of G-protein coupled receptors. This is Protein odr-4 homolog (odr4) from Xenopus tropicalis (Western clawed frog).